Here is a 319-residue protein sequence, read N- to C-terminus: Cobalamin biosynthesis protein CbiB (319 aa).

The next 4 membrane-spanning stretches (helical) occupy residues 56–76 (VMWVVVVGVTWGVAWGVLALA), 82–102 (WFGWSVEVWMIFTTLAGRSLA), 153–173 (VDGIIAPLFFLFLGGAPLAMA), and 296–316 (LMWVASTLALALFIAARCGLS).

It belongs to the CobD/CbiB family.

The protein localises to the cell membrane. The protein operates within cofactor biosynthesis; adenosylcobalamin biosynthesis. In terms of biological role, converts cobyric acid to cobinamide by the addition of aminopropanol on the F carboxylic group. However, the true cosubstrate could be (R)-1-amino-2-propanol O-2-phosphate, leading to cobinamide phosphate. The sequence is that of Cobalamin biosynthesis protein CbiB from Salmonella paratyphi A (strain ATCC 9150 / SARB42).